A 323-amino-acid polypeptide reads, in one-letter code: MNPENWTQVTSFVLLGFPSSHLIQFLVFLGLMVTYIVTATGKLLIIVLSWIDQRLHIQMYFFLRNFSFLELLLVTVVVPKMLVVILTGDHTISFVSCIIQSYLYFFLGTTDFFLLAVMSLDRYLAICRPLRYETLMNGHVCSQLVLASWLAGFLWVLCPTVLMASLPFCGPNGIDHFFRDSWPLLRLSCGDTHLLKLVAFMLSTLVLLGSLALTSVSYACILATVLRAPTAAERRKAFSTCASHLTVVVIIYGSSIFLYIRMSEAQSKLLNKGASVLSCIITPLLNPFIFTLRNDKVQQALREALGWPRLTAVMKLRVTSQRK.

The Extracellular portion of the chain corresponds to 1–25; the sequence is MNPENWTQVTSFVLLGFPSSHLIQF. N-linked (GlcNAc...) asparagine glycosylation occurs at Asn-5. The helical transmembrane segment at 26–46 threads the bilayer; sequence LVFLGLMVTYIVTATGKLLII. The Cytoplasmic portion of the chain corresponds to 47-54; that stretch reads VLSWIDQR. A helical membrane pass occupies residues 55–75; sequence LHIQMYFFLRNFSFLELLLVT. Over 76-99 the chain is Extracellular; it reads VVVPKMLVVILTGDHTISFVSCII. Cys-97 and Cys-189 form a disulfide bridge. A helical membrane pass occupies residues 100-120; the sequence is QSYLYFFLGTTDFFLLAVMSL. Residues 121 to 139 lie on the Cytoplasmic side of the membrane; sequence DRYLAICRPLRYETLMNGH. A helical membrane pass occupies residues 140–160; that stretch reads VCSQLVLASWLAGFLWVLCPT. The Extracellular portion of the chain corresponds to 161–197; it reads VLMASLPFCGPNGIDHFFRDSWPLLRLSCGDTHLLKL. Residues 198–217 traverse the membrane as a helical segment; sequence VAFMLSTLVLLGSLALTSVS. The Cytoplasmic portion of the chain corresponds to 218–237; it reads YACILATVLRAPTAAERRKA. Residues 238–258 form a helical membrane-spanning segment; the sequence is FSTCASHLTVVVIIYGSSIFL. The Extracellular portion of the chain corresponds to 259–271; the sequence is YIRMSEAQSKLLN. The helical transmembrane segment at 272-292 threads the bilayer; sequence KGASVLSCIITPLLNPFIFTL. Over 293-323 the chain is Cytoplasmic; it reads RNDKVQQALREALGWPRLTAVMKLRVTSQRK.

The protein belongs to the G-protein coupled receptor 1 family.

It is found in the cell membrane. Functionally, odorant receptor. This chain is Olfactory receptor 6T1 (OR6T1), found in Homo sapiens (Human).